Consider the following 366-residue polypeptide: MLKTISGTLALSLIIAASVHQAQAATTYNAVVSKSSSDGKTFKTIADAIASAPAGSTPFVILIKNGVYNERLTITRNNLLLKGESRNGAVIAAATAAGTLKSDGSKWGTAGSSTITISAKDFSAQSLTIRNDFDFPANQAKSDSDSSKIKDTQAVALYVTKSGDRAYFKDVSLVGYQDTLYVSGGRSFFSDCRISGTVDFIFGDGTALFNNCDLVSRYRADVKSGNVSGYLTAPSTNINQKYGLVITNSRVIRESDSVPAKSYGLGRPWHPTTTFSDGRYADPNAIGQTVFLNTSMDNHIYGWDKMSGKDKNGNTIWFNPEDSRFFEYKSYGAGAAVSKDRRQLTDAQAAEYTQSKVLGDWTPTLP.

Residues 1–24 (MLKTISGTLALSLIIAASVHQAQA) form the signal peptide. Positions 109 and 153 each coordinate substrate. Aspartate 178 functions as the Proton donor in the catalytic mechanism. A disulfide bridge links cysteine 192 with cysteine 212. Catalysis depends on aspartate 199, which acts as the Nucleophile. Substrate is bound by residues arginine 219, asparagine 226, tyrosine 230, arginine 267, tryptophan 269, and threonine 272.

The protein belongs to the pectinesterase family. Monomer.

Its subcellular location is the secreted. The catalysed reaction is [(1-&gt;4)-alpha-D-galacturonosyl methyl ester](n) + n H2O = [(1-&gt;4)-alpha-D-galacturonosyl](n) + n methanol + n H(+). Its pathway is glycan metabolism; pectin degradation; 2-dehydro-3-deoxy-D-gluconate from pectin: step 1/5. In terms of biological role, involved in maceration and soft-rotting of plant tissue. In Dickeya chrysanthemi (Pectobacterium chrysanthemi), this protein is Pectinesterase A (pemA).